A 287-amino-acid polypeptide reads, in one-letter code: 3-methyl-2-oxobutanoate hydroxymethyltransferase (287 aa).

Mg(2+) is bound by residues Asp-57 and Asp-96. 3-methyl-2-oxobutanoate-binding positions include Asp-57 to Ser-58, Asp-96, and Lys-125. Glu-127 lines the Mg(2+) pocket. Residue Glu-194 is the Proton acceptor of the active site.

This sequence belongs to the PanB family. Homodecamer; pentamer of dimers. Mg(2+) serves as cofactor.

It is found in the cytoplasm. The enzyme catalyses 3-methyl-2-oxobutanoate + (6R)-5,10-methylene-5,6,7,8-tetrahydrofolate + H2O = 2-dehydropantoate + (6S)-5,6,7,8-tetrahydrofolate. It participates in cofactor biosynthesis; (R)-pantothenate biosynthesis; (R)-pantoate from 3-methyl-2-oxobutanoate: step 1/2. Catalyzes the reversible reaction in which hydroxymethyl group from 5,10-methylenetetrahydrofolate is transferred onto alpha-ketoisovalerate to form ketopantoate. In Methylobacterium sp. (strain 4-46), this protein is 3-methyl-2-oxobutanoate hydroxymethyltransferase.